Reading from the N-terminus, the 302-residue chain is Heme A synthase (302 aa).

The Cytoplasmic portion of the chain corresponds to 1-6; that stretch reads MNKALK. Residues 7 to 27 form a helical membrane-spanning segment; the sequence is GLGIITTIAMLFVLIGGALVT. Residues 28–61 are Extracellular-facing; it reads KTGSGMGCGRSWPLCNGSIFPALTLESIIEWSHR. Residues Cys35 and Cys42 are joined by a disulfide bond. Glu57 is a catalytic residue. His60 is a heme o binding site. A helical membrane pass occupies residues 62–82; that stretch reads FVSGTSGVLVLALAIWTWKKI. Residues 83-91 lie on the Cytoplasmic side of the membrane; the sequence is GHIRETKFL. The helical transmembrane segment at 92-112 threads the bilayer; it reads AVMSVVFLILQALLGAAAVVF. Over 113–120 the chain is Extracellular; it reads GSSALIMA. The chain crosses the membrane as a helical span at residues 121-141; that stretch reads LHFGISLISFASVLLLTLLVF. His122 is a heme o binding site. The Cytoplasmic portion of the chain corresponds to 142–158; sequence EADSKQKSESFYIGKTM. The helical transmembrane segment at 159 to 179 threads the bilayer; the sequence is QFHMIGIIIYTYVVVYTGAYV. The Extracellular portion of the chain corresponds to 180–208; the sequence is RHTSSSLACLDFPMCSTENGWLPGKFHEW. Cys188 and Cys194 are oxidised to a cystine. Residues 209–229 form a helical membrane-spanning segment; the sequence is VQMGHRAAALLLFAWIIAAAV. Residue His213 participates in heme b binding. Over 230–242 the chain is Cytoplasmic; sequence HAARQYKNQKRIY. Residues 243–263 form a helical membrane-spanning segment; sequence WGWMISLILIILQAASGIAVV. Topologically, residues 264 to 272 are extracellular; it reads YSRLDLGFA. A helical membrane pass occupies residues 273–293; it reads LAHAFFISCLFGILCYFLLLV. Residue His275 coordinates heme b. Over 294-302 the chain is Cytoplasmic; sequence ARYRRQVQK.

The protein belongs to the COX15/CtaA family. Type 1 subfamily. In terms of assembly, interacts with CtaB. Heme b serves as cofactor.

Its subcellular location is the cell membrane. The enzyme catalyses Fe(II)-heme o + 2 A + H2O = Fe(II)-heme a + 2 AH2. It participates in porphyrin-containing compound metabolism; heme A biosynthesis; heme A from heme O: step 1/1. Its function is as follows. Catalyzes the conversion of heme O to heme A by two successive hydroxylations of the methyl group at C8. The first hydroxylation forms heme I, the second hydroxylation results in an unstable dihydroxymethyl group, which spontaneously dehydrates, resulting in the formyl group of heme A. This Bacillus licheniformis (strain ATCC 14580 / DSM 13 / JCM 2505 / CCUG 7422 / NBRC 12200 / NCIMB 9375 / NCTC 10341 / NRRL NRS-1264 / Gibson 46) protein is Heme A synthase.